A 361-amino-acid polypeptide reads, in one-letter code: Molybdopterin synthase catalytic subunit (361 aa).

Residues 101–102 (HR), K117, and 124–126 (KKE) each bind substrate.

This sequence belongs to the MoaE family. MOCS2B subfamily. Heterotetramer; composed of 2 small (Mocs2A) and 2 large (Mocs2B) subunits.

The protein resides in the cytoplasm. The enzyme catalyses 2 [molybdopterin-synthase sulfur-carrier protein]-C-terminal-Gly-aminoethanethioate + cyclic pyranopterin phosphate + H2O = molybdopterin + 2 [molybdopterin-synthase sulfur-carrier protein]-C-terminal Gly-Gly + 2 H(+). The protein operates within cofactor biosynthesis; molybdopterin biosynthesis. In terms of biological role, catalytic subunit of the molybdopterin synthase complex, a complex that catalyzes the conversion of precursor Z into molybdopterin. Acts by mediating the incorporation of 2 sulfur atoms from thiocarboxylated Mocs2A into precursor Z to generate a dithiolene group. This is Molybdopterin synthase catalytic subunit from Drosophila persimilis (Fruit fly).